The sequence spans 513 residues: MQLNSTEISELIKKRIAQFDVVSEARNTGTIVSVSDGIIRIHGLSEVMQGEMIALPDNRYAMALNLERDSVGAVVMGPYIDLAEGMEVQCTGRILEVPVGRGLLGRVVNTLGQPIDGKGEIKNDGFSPVEVIAPGVIERKSVDQPVQTGYKAVDSMVPIGRGQRELIIGDRQTGKTALAIDTIINQKDSGIKCIYVAIGQKASTIANVVRKLEENGALANTIIVVASASESAALQYLAPYAGCAMGEYFRDRGEDALIIYDDLSKQAVAYRQISLLLRRPPGREAFPGDVFYLHSRLLERAARVNEEYVENFTKGEVKGKTGSLTALPIIETQAGDVSAFVPTNVISITDGQIFLESNLFNAGVRPAVNPGISVSRVGGAAQTKVVKKLAGGIRTALAQYRELAAFAQFASDLDDATRKQLSHGEKVTEMLKQKQYAPLSVAEQAVLLFAVEFGYLDDVELNKIADFETTLLDYANRTNAEFMRELTQSGDYNDEIKNTLEGILNNFKANNTW.

169–176 (GDRQTGKT) contacts ATP.

The protein belongs to the ATPase alpha/beta chains family. F-type ATPases have 2 components, CF(1) - the catalytic core - and CF(0) - the membrane proton channel. CF(1) has five subunits: alpha(3), beta(3), gamma(1), delta(1), epsilon(1). CF(0) has three main subunits: a(1), b(2) and c(9-12). The alpha and beta chains form an alternating ring which encloses part of the gamma chain. CF(1) is attached to CF(0) by a central stalk formed by the gamma and epsilon chains, while a peripheral stalk is formed by the delta and b chains.

It localises to the cell inner membrane. It carries out the reaction ATP + H2O + 4 H(+)(in) = ADP + phosphate + 5 H(+)(out). Functionally, produces ATP from ADP in the presence of a proton gradient across the membrane. The alpha chain is a regulatory subunit. The polypeptide is ATP synthase subunit alpha (Actinobacillus succinogenes (strain ATCC 55618 / DSM 22257 / CCUG 43843 / 130Z)).